A 279-amino-acid polypeptide reads, in one-letter code: Four and a half LIM domains protein 2 (279 aa).

Residues 7–31 form a C4-type zinc finger; sequence CHHCNESLYGKKYILKEENPHCVAC. LIM zinc-binding domains are found at residues 40-92, 101-153, and 162-212; these read CEEC…CTDC, CQEC…CVPC, and CVQC…CLTC. Lysine 78 is covalently cross-linked (Glycyl lysine isopeptide (Lys-Gly) (interchain with G-Cter in SUMO2)). Glycyl lysine isopeptide (Lys-Gly) (interchain with G-Cter in SUMO2) cross-links involve residues lysine 167 and lysine 220. The 55-residue stretch at 221–275 folds into the LIM zinc-binding 4 domain; sequence CAGCTNPISGLGGTKYISFEERQWHNDCFNCKKCSLSLVGRGFLTERDDILCPDC. Phosphoserine is present on serine 238.

In terms of assembly, interacts with ZNF638 and TTN/titin. Interacts with E4F1. Interacts with GRB7. Interacts with SIRT1 and FOXO1. Interacts with CEFIP. Interacts with calcineurin. Interacts with FOXK1. Highly expressed in heart but also detectable in brain and skeletal muscle.

It localises to the cytoplasm. It is found in the nucleus. The protein resides in the myofibril. The protein localises to the sarcomere. Its subcellular location is the z line. Functionally, may function as a molecular transmitter linking various signaling pathways to transcriptional regulation. Negatively regulates the transcriptional repressor E4F1 and may function in cell growth. Inhibits the transcriptional activity of FOXO1 and its apoptotic function by enhancing the interaction of FOXO1 with SIRT1 and FOXO1 deacetylation. Negatively regulates the calcineurin/NFAT signaling pathway in cardiomyocytes. This chain is Four and a half LIM domains protein 2 (Fhl2), found in Mus musculus (Mouse).